The sequence spans 314 residues: Secreted frizzled-related protein 1 (314 aa).

A signal peptide spans 1-31; sequence MGVGRSEGGRRGAALGVLLALGVALLAVGSA. Residues 53-169 enclose the FZ domain; that stretch reads TKPHQCVAIP…FPQDYVCIAM (117 aa). 5 disulfides stabilise this stretch: cysteine 58–cysteine 121, cysteine 68–cysteine 114, cysteine 105–cysteine 140, cysteine 129–cysteine 166, and cysteine 133–cysteine 157. Asparagine 173 carries N-linked (GlcNAc...) asparagine glycosylation. Intrachain disulfides connect cysteine 186–cysteine 256, cysteine 189–cysteine 258, and cysteine 203–cysteine 306. The NTR domain occupies 186 to 306; that stretch reads CPPCDNEMKS…FMKKVKAPDC (121 aa).

The protein belongs to the secreted frizzled-related protein (sFRP) family.

It localises to the secreted. Functionally, soluble frizzled-related proteins (sFRPS) function as modulators of Wnt signaling through direct interaction with Wnts. They have a role in regulating cell growth and differentiation in specific cell types. This is Secreted frizzled-related protein 1 (SFRP1) from Gallus gallus (Chicken).